The sequence spans 478 residues: Receptor-interacting serine/threonine-protein kinase 3 (478 aa).

Ser-2 is subject to Phosphoserine. In terms of domain architecture, Protein kinase spans 22-290; the sequence is LENLGFVGKG…CESKTNNVYI (269 aa). ATP contacts are provided by residues 28–36 and Lys-51; that span reads VGKGGFGAV. Asp-143 functions as the Proton acceptor in the catalytic mechanism. Residue Ser-165 is modified to Phosphoserine. Thr-185 carries the post-translational modification Phosphothreonine. Phosphoserine; by autocatalysis is present on Ser-201. A Phosphothreonine modification is found at Thr-228. Ser-229 bears the Phosphoserine; by autocatalysis mark. Thr-254 is modified (phosphothreonine). Residues Ser-301 and Ser-323 each carry the phosphoserine modification. Positions 311–330 are disordered; that stretch reads RSSDTKLSARESSQKGTEVD. Residues 313 to 330 are compositionally biased toward basic and acidic residues; it reads SDTKLSARESSQKGTEVD. A Phosphothreonine modification is found at Thr-335. A phosphoserine mark is found at Ser-350, Ser-369, and Ser-380. Residues 362–429 are disordered; that stretch reads ERRGKEASFG…RNSNPWYTWN (68 aa). Residues 376 to 385 are compositionally biased toward polar residues; that stretch reads AGTSSDTLAG. Position 392 is a phosphothreonine (Thr-392). Residues 413–429 are compositionally biased toward polar residues; that stretch reads QRNQGDGRNSNPWYTWN. The RIP homotypic interaction motif (RHIM) signature appears at 437-461; the sequence is LQSIVLNNCSEVQIGQHNCMSVQPR. Position 474 is an omega-N-methylarginine (Arg-474).

Belongs to the protein kinase superfamily. TKL Ser/Thr protein kinase family. Interacts (via RIP homotypic interaction motif) with RIPK1 (via RIP homotypic interaction motif); this interaction induces RIPK1 phosphorylation and formation of a RIPK1-RIPK3 necrosis-inducing complex. Interacts with MLKL; the interaction is direct and triggers necroptosis. Interacts with ZBP1 (via RIP homotypic interaction motif); interaction with ZBP1 activates RIPK3, triggering necroptosis. Upon TNF-induced necrosis, the RIPK1-RIPK3 dimer further interacts with PGAM5 and MLKL; the formation of this complex leads to PGAM5 phosphorylation and increase in PGAM5 phosphatase activity. Binds TRAF2 and is recruited to the TNFR-1 signaling complex. Interacts with PYGL, GLUL and GLUD1; these interactions result in activation of these metabolic enzymes. Interacts with BIRC2/c-IAP1, BIRC3/c-IAP2 and XIAP/BIRC4. Interacts with ARHGEF2. Interacts with PELI1 (via atypical FHA domain); the phosphorylated form at Thr-185 binds preferentially to PELI1. Interacts with BUB1B, TRAF2 and STUB1. Interacts with CASP6. Component of the AIM2 PANoptosome complex, a multiprotein complex that drives inflammatory cell death (PANoptosis). RIPK1 and RIPK3 undergo reciprocal auto- and trans-phosphorylation. Autophosphorylated following interaction with ZBP1. Phosphorylation of Ser-201 plays a role in the necroptotic function of RIPK3. Autophosphorylates at Thr-228 and Ser-229 following activation by ZBP1: phosphorylation at these sites is a hallmark of necroptosis and is required for binding MLKL. Phosphorylation at Thr-185 is important for its kinase activity, interaction with PELI1 and for its ability to mediate TNF-induced necroptosis. Post-translationally, polyubiquitinated with 'Lys-48' and 'Lys-63'-linked chains by BIRC2/c-IAP1 and BIRC3/c-IAP2, leading to activation of NF-kappa-B. Ubiquitinated by STUB1 leading to its subsequent proteasome-dependent degradation.

It localises to the cytoplasm. The protein localises to the cytosol. It is found in the nucleus. It carries out the reaction L-seryl-[protein] + ATP = O-phospho-L-seryl-[protein] + ADP + H(+). The enzyme catalyses L-threonyl-[protein] + ATP = O-phospho-L-threonyl-[protein] + ADP + H(+). With respect to regulation, activity is stimulated by ZBP1, which senses double-stranded Z-RNA structures. RIPK3-dependent necroptosis is inhibited by RIPK1: RIPK1 prevents the ZBP1-induced activation of RIPK3 via FADD-mediated recruitment of CASP8, which cleaves RIPK1 and limits TNF-induced necroptosis. Its function is as follows. Serine/threonine-protein kinase that activates necroptosis and apoptosis, two parallel forms of cell death. Necroptosis, a programmed cell death process in response to death-inducing TNF-alpha family members, is triggered by RIPK3 following activation by ZBP1. Activated RIPK3 forms a necrosis-inducing complex and mediates phosphorylation of MLKL, promoting MLKL localization to the plasma membrane and execution of programmed necrosis characterized by calcium influx and plasma membrane damage. In addition to TNF-induced necroptosis, necroptosis can also take place in the nucleus in response to orthomyxoviruses infection: following ZBP1 activation, which senses double-stranded Z-RNA structures, nuclear RIPK3 catalyzes phosphorylation and activation of MLKL, promoting disruption of the nuclear envelope and leakage of cellular DNA into the cytosol. Also regulates apoptosis: apoptosis depends on RIPK1, FADD and CASP8, and is independent of MLKL and RIPK3 kinase activity. Phosphorylates RIPK1: RIPK1 and RIPK3 undergo reciprocal auto- and trans-phosphorylation. In some cell types, also able to restrict viral replication by promoting cell death-independent responses. In response to flavivirus infection in neurons, promotes a cell death-independent pathway that restricts viral replication: together with ZBP1, promotes a death-independent transcriptional program that modifies the cellular metabolism via up-regulation expression of the enzyme ACOD1/IRG1 and production of the metabolite itaconate. Itaconate inhibits the activity of succinate dehydrogenase, generating a metabolic state in neurons that suppresses replication of viral genomes. RIPK3 binds to and enhances the activity of three metabolic enzymes: GLUL, GLUD1, and PYGL. These metabolic enzymes may eventually stimulate the tricarboxylic acid cycle and oxidative phosphorylation, which could result in enhanced ROS production. This is Receptor-interacting serine/threonine-protein kinase 3 from Rattus norvegicus (Rat).